The following is a 300-amino-acid chain: Folate-binding protein 1 (300 aa).

The signal sequence occupies residues 1–28 (MGRCLTKKVFLIQSPILFLHLLISLSSG). 5 disulfide bridges follow: Cys-38/Cys-76, Cys-68/Cys-111, Cys-77/Cys-114, Cys-102/Cys-139, and Cys-132/Cys-178. Residue Asn-173 is glycosylated (N-linked (GlcNAc...) asparagine). Residues 238–258 (MTTIQKISLGMSFLIAGMFLI) form a helical membrane-spanning segment.

Belongs to the folate receptor family. As to expression, expressed in leaves.

The protein resides in the membrane. Functionally, folic acid-binding protein involved in salicylic acid- (SA-) induced folate accumulation by triggering uptake and accumulation of folic acid in cells. May be implicated in the transport of the folates from the site of production (leaves) to the site of storage (fruits and seeds) and utilization (roots). The sequence is that of Folate-binding protein 1 from Arabidopsis thaliana (Mouse-ear cress).